The following is a 370-amino-acid chain: Spermidine/putrescine import ATP-binding protein PotA (370 aa).

The region spanning 6–236 (IELHQVTKRY…PINHFVADFI (231 aa)) is the ABC transporter domain. 38–45 (GPSGCGKT) lines the ATP pocket.

This sequence belongs to the ABC transporter superfamily. Spermidine/putrescine importer (TC 3.A.1.11.1) family. In terms of assembly, the complex is composed of two ATP-binding proteins (PotA), two transmembrane proteins (PotB and PotC) and a solute-binding protein (PotD).

The protein localises to the cell membrane. It carries out the reaction ATP + H2O + polyamine-[polyamine-binding protein]Side 1 = ADP + phosphate + polyamineSide 2 + [polyamine-binding protein]Side 1.. Part of the ABC transporter complex PotABCD involved in spermidine/putrescine import. Responsible for energy coupling to the transport system. This is Spermidine/putrescine import ATP-binding protein PotA from Levilactobacillus brevis (strain ATCC 367 / BCRC 12310 / CIP 105137 / JCM 1170 / LMG 11437 / NCIMB 947 / NCTC 947) (Lactobacillus brevis).